Reading from the N-terminus, the 303-residue chain is UDP-N-acetylenolpyruvoylglucosamine reductase (303 aa).

The region spanning 29 to 196 (KIGGPADVLV…LEAVLQLEQK (168 aa)) is the FAD-binding PCMH-type domain. Arg174 is a catalytic residue. Catalysis depends on Ser225, which acts as the Proton donor. Glu295 is a catalytic residue.

It belongs to the MurB family. FAD is required as a cofactor.

The protein localises to the cytoplasm. The enzyme catalyses UDP-N-acetyl-alpha-D-muramate + NADP(+) = UDP-N-acetyl-3-O-(1-carboxyvinyl)-alpha-D-glucosamine + NADPH + H(+). Its pathway is cell wall biogenesis; peptidoglycan biosynthesis. Its function is as follows. Cell wall formation. In Bacillus licheniformis (strain ATCC 14580 / DSM 13 / JCM 2505 / CCUG 7422 / NBRC 12200 / NCIMB 9375 / NCTC 10341 / NRRL NRS-1264 / Gibson 46), this protein is UDP-N-acetylenolpyruvoylglucosamine reductase.